We begin with the raw amino-acid sequence, 404 residues long: Argininosuccinate synthase (404 aa).

Residues 10 to 18 (AYSGGVDTS) and A38 contribute to the ATP site. Residue Y89 coordinates L-citrulline. Position 119 (G119) interacts with ATP. L-aspartate contacts are provided by T121, N125, and D126. N125 serves as a coordination point for L-citrulline. Positions 129, 177, 186, 262, and 274 each coordinate L-citrulline.

It belongs to the argininosuccinate synthase family. Type 1 subfamily. Homotetramer.

The protein localises to the cytoplasm. It carries out the reaction L-citrulline + L-aspartate + ATP = 2-(N(omega)-L-arginino)succinate + AMP + diphosphate + H(+). Its pathway is amino-acid biosynthesis; L-arginine biosynthesis; L-arginine from L-ornithine and carbamoyl phosphate: step 2/3. The sequence is that of Argininosuccinate synthase from Prochlorococcus marinus (strain AS9601).